The following is a 492-amino-acid chain: Catalase (492 aa).

Active-site residues include H65 and N138. Y348 provides a ligand contact to heme.

The protein belongs to the catalase family. Homotetramer. It depends on heme as a cofactor.

Its subcellular location is the cytoplasm. It is found in the cytosol. The protein localises to the peroxisome matrix. The catalysed reaction is 2 H2O2 = O2 + 2 H2O. Catalyzes the degradation of hydrogen peroxide (H(2)O(2)) generated by peroxisomal oxidases to water and oxygen, thereby protecting cells from the toxic effects of hydrogen peroxide. This Soldanella alpina (Alpine snowbell) protein is Catalase.